The following is a 112-amino-acid chain: Small ribosomal subunit protein bS6c (112 aa).

The protein belongs to the bacterial ribosomal protein bS6 family.

It localises to the plastid. It is found in the chloroplast. Functionally, binds together with bS18 to 16S ribosomal RNA. This is Small ribosomal subunit protein bS6c (rps6) from Porphyra purpurea (Red seaweed).